Here is a 362-residue protein sequence, read N- to C-terminus: MAHRRIILLLAAAAVAATSAVAAASSGFDDSNPIRSVTDHAASALESTVIAALGRTRDALRFARFAVRHGKRYGDAAEVQRRFRIFSESLELVRSTNRRGLPYRLGINRFADMSWEEFQASRLGAAQNCSATLAGNHRMRDAAALPETKDWREDGIVSPVKDQGHCGSCWTFSTTGSLEAAYTQATGKPVSLSEQQLVDCATAYNNFGCSGGLPSQAFEYIKYNGGLDTEEAYPYTGVNGICHYKPENVGVKVLDSVNITLGAEDELKNAVGLVRPVSVAFQVINGFRMYKSGVYTSDHCGTSPMDVNHAVLAVGYGVENGVPYWLIKNSWGADWGDNGYFKMEMGKNMCGIATCASYPIVA.

Residues 1–24 form the signal peptide; sequence MAHRRIILLLAAAAVAATSAVAAA. Residues 25–144 constitute a propeptide, activation peptide; that stretch reads SSGFDDSNPI…GNHRMRDAAA (120 aa). An N-linked (GlcNAc...) asparagine glycan is attached at asparagine 128. 2 cysteine pairs are disulfide-bonded: cysteine 166–cysteine 209 and cysteine 200–cysteine 242. Cysteine 169 is an active-site residue. N-linked (GlcNAc...) asparagine glycosylation occurs at asparagine 258. A disulfide bond links cysteine 300 and cysteine 350. Catalysis depends on residues histidine 309 and asparagine 329.

It belongs to the peptidase C1 family. Expressed only in seeds.

The chain is Oryzain gamma chain from Oryza sativa subsp. japonica (Rice).